We begin with the raw amino-acid sequence, 112 residues long: Small ribosomal subunit protein bS16 (112 aa).

The protein belongs to the bacterial ribosomal protein bS16 family.

In Karelsulcia muelleri (strain GWSS) (Sulcia muelleri), this protein is Small ribosomal subunit protein bS16.